Here is a 248-residue protein sequence, read N- to C-terminus: Anamorsin homolog (248 aa).

An N-terminal SAM-like domain region spans residues 4–130 (FKGLQKSLYI…ETGSSARLSF (127 aa)). The tract at residues 131–161 (AKKSPSMNVWKISGDDEELIDEEELLDEEDK) is linker. The [2Fe-2S] cluster site is built by C172, C181, C184, and C186. The segment at 172-186 (CSTTGKRKACKNCSC) is fe-S binding site A. Positions 209, 212, 220, and 223 each coordinate [4Fe-4S] cluster. Short sequence motifs (cx2C motif) lie at residues 209 to 212 (CGNC) and 220 to 223 (CSTC). A fe-S binding site B region spans residues 209 to 223 (CGNCYLGDAFRCSTC).

It belongs to the anamorsin family. Monomer. It depends on [2Fe-2S] cluster as a cofactor. The cofactor is [4Fe-4S] cluster.

Its subcellular location is the cytoplasm. It localises to the mitochondrion intermembrane space. In terms of biological role, component of the cytosolic iron-sulfur (Fe-S) protein assembly (CIA) machinery. Required for the maturation of extramitochondrial Fe-S proteins. Part of an electron transfer chain functioning in an early step of cytosolic Fe-S biogenesis, facilitating the de novo assembly of a [4Fe-4S] cluster on the cytosolic Fe-S scaffold complex. Electrons are transferred from NADPH via a FAD- and FMN-containing diflavin oxidoreductase. Together with the diflavin oxidoreductase, also required for the assembly of the diferric tyrosyl radical cofactor of ribonucleotide reductase (RNR), probably by providing electrons for reduction during radical cofactor maturation in the catalytic small subunit. This chain is Anamorsin homolog, found in Drosophila mojavensis (Fruit fly).